Reading from the N-terminus, the 495-residue chain is Glutamyl-tRNA(Gln) amidotransferase subunit A (495 aa).

Residues lysine 79 and serine 159 each act as charge relay system in the active site. Serine 183 acts as the Acyl-ester intermediate in catalysis.

It belongs to the amidase family. GatA subfamily. In terms of assembly, heterotrimer of A, B and C subunits.

The catalysed reaction is L-glutamyl-tRNA(Gln) + L-glutamine + ATP + H2O = L-glutaminyl-tRNA(Gln) + L-glutamate + ADP + phosphate + H(+). In terms of biological role, allows the formation of correctly charged Gln-tRNA(Gln) through the transamidation of misacylated Glu-tRNA(Gln) in organisms which lack glutaminyl-tRNA synthetase. The reaction takes place in the presence of glutamine and ATP through an activated gamma-phospho-Glu-tRNA(Gln). The chain is Glutamyl-tRNA(Gln) amidotransferase subunit A from Gluconobacter oxydans (strain 621H) (Gluconobacter suboxydans).